We begin with the raw amino-acid sequence, 254 residues long: Probable protein ABIL5 (254 aa).

The tract at residues 1 to 26 (MEVAEAGVDGVAGRRQQEEASGAAPF) is disordered.

Belongs to the ABI family. As to quaternary structure, binds SCAR.

It is found in the cytoplasm. Its subcellular location is the cytoskeleton. In terms of biological role, involved in regulation of actin and microtubule organization. Part of a WAVE complex that activates the Arp2/3 complex. In Oryza sativa subsp. japonica (Rice), this protein is Probable protein ABIL5.